The primary structure comprises 104 residues: Integration host factor subunit beta (104 aa).

The protein belongs to the bacterial histone-like protein family. In terms of assembly, heterodimer of an alpha and a beta chain.

In terms of biological role, this protein is one of the two subunits of integration host factor, a specific DNA-binding protein that functions in genetic recombination as well as in transcriptional and translational control. This chain is Integration host factor subunit beta, found in Xylella fastidiosa (strain M23).